The primary structure comprises 185 residues: Ribosome-recycling factor (185 aa).

This sequence belongs to the RRF family.

It is found in the cytoplasm. Functionally, responsible for the release of ribosomes from messenger RNA at the termination of protein biosynthesis. May increase the efficiency of translation by recycling ribosomes from one round of translation to another. The protein is Ribosome-recycling factor of Roseiflexus sp. (strain RS-1).